The following is a 133-amino-acid chain: Otoraplin (133 aa).

A signal peptide spans 1-23; that stretch reads MAKTFYVVVIVLCLGFIHQKAYG. 2 disulfides stabilise this stretch: Cys35/Cys40 and Cys58/Cys132. Positions 42-115 constitute an SH3 domain; that stretch reads YAISFGRAED…PSSLVTELTV (74 aa).

The protein belongs to the MIA/OTOR family.

Its subcellular location is the secreted. This chain is Otoraplin (OTOR), found in Aquarana catesbeiana (American bullfrog).